The sequence spans 294 residues: 4-hydroxy-tetrahydrodipicolinate synthase (294 aa).

Threonine 44 is a binding site for pyruvate. Residue tyrosine 132 is the Proton donor/acceptor of the active site. Lysine 160 acts as the Schiff-base intermediate with substrate in catalysis. Isoleucine 205 is a binding site for pyruvate.

It belongs to the DapA family. Homotetramer; dimer of dimers.

It is found in the cytoplasm. It catalyses the reaction L-aspartate 4-semialdehyde + pyruvate = (2S,4S)-4-hydroxy-2,3,4,5-tetrahydrodipicolinate + H2O + H(+). It functions in the pathway amino-acid biosynthesis; L-lysine biosynthesis via DAP pathway; (S)-tetrahydrodipicolinate from L-aspartate: step 3/4. Catalyzes the condensation of (S)-aspartate-beta-semialdehyde [(S)-ASA] and pyruvate to 4-hydroxy-tetrahydrodipicolinate (HTPA). In Kosmotoga olearia (strain ATCC BAA-1733 / DSM 21960 / TBF 19.5.1), this protein is 4-hydroxy-tetrahydrodipicolinate synthase.